A 234-amino-acid polypeptide reads, in one-letter code: NAD-dependent protein deacylase (234 aa).

The Deacetylase sirtuin-type domain occupies 1 to 234; it reads MKNLVILSGA…IEMASQEMLK (234 aa). 9–28 serves as a coordination point for NAD(+); sequence GAGISAESGIKTFRDAGGLW. Residues Tyr-53 and Arg-56 each coordinate substrate. Position 86–89 (86–89) interacts with NAD(+); sequence QNVD. The active-site Proton acceptor is the His-104. Residues 169-171 and Met-217 each bind NAD(+); that span reads GTS.

This sequence belongs to the sirtuin family. Class III subfamily.

The protein localises to the cytoplasm. It carries out the reaction N(6)-acetyl-L-lysyl-[protein] + NAD(+) + H2O = 2''-O-acetyl-ADP-D-ribose + nicotinamide + L-lysyl-[protein]. It catalyses the reaction N(6)-succinyl-L-lysyl-[protein] + NAD(+) + H2O = 2''-O-succinyl-ADP-D-ribose + nicotinamide + L-lysyl-[protein]. In terms of biological role, NAD-dependent lysine deacetylase and desuccinylase that specifically removes acetyl and succinyl groups on target proteins. Modulates the activities of several proteins which are inactive in their acylated form. This chain is NAD-dependent protein deacylase, found in Helicobacter pylori (strain J99 / ATCC 700824) (Campylobacter pylori J99).